The following is a 282-amino-acid chain: Probable xyloglucan endotransglucosylase/hydrolase protein 18 (282 aa).

The signal sequence occupies residues 1 to 26 (MKLSCGTSFAFLIMFLFAAQSMHVYA). A GH16 domain is found at 27 to 218 (GSFHKDVQIH…WSKAPFTAFY (192 aa)). E104 functions as the Nucleophile in the catalytic mechanism. E108 serves as the catalytic Proton donor. Position 108 (E108) interacts with xyloglucan. Residue N112 is glycosylated (N-linked (GlcNAc...) asparagine). Xyloglucan contacts are provided by residues 121-123 (HTN), 131-133 (DKE), 197-198 (HW), and G202. C226 and C235 form a disulfide bridge. The N-linked (GlcNAc...) asparagine glycan is linked to N238. A disulfide bridge connects residues C267 and C281. R272 is a xyloglucan binding site.

It belongs to the glycosyl hydrolase 16 family. XTH group 2 subfamily. Post-translationally, contains at least one intrachain disulfide bond essential for its enzymatic activity. In terms of tissue distribution, root specific.

Its subcellular location is the secreted. It localises to the cell wall. It is found in the extracellular space. The protein resides in the apoplast. The catalysed reaction is breaks a beta-(1-&gt;4) bond in the backbone of a xyloglucan and transfers the xyloglucanyl segment on to O-4 of the non-reducing terminal glucose residue of an acceptor, which can be a xyloglucan or an oligosaccharide of xyloglucan.. In terms of biological role, catalyzes xyloglucan endohydrolysis (XEH) and/or endotransglycosylation (XET). Cleaves and religates xyloglucan polymers, an essential constituent of the primary cell wall, and thereby participates in cell wall construction of growing tissues. This chain is Probable xyloglucan endotransglucosylase/hydrolase protein 18 (XTH18), found in Arabidopsis thaliana (Mouse-ear cress).